A 225-amino-acid polypeptide reads, in one-letter code: PKHD-type hydroxylase YbiX (225 aa).

One can recognise a Fe2OG dioxygenase domain in the interval 78 to 177 (TLSTPLFNRY…RVASFMWIQS (100 aa)). Residues histidine 96, aspartate 98, and histidine 158 each coordinate Fe cation. Arginine 168 contacts 2-oxoglutarate.

Fe(2+) is required as a cofactor. L-ascorbate serves as cofactor.

The protein is PKHD-type hydroxylase YbiX of Escherichia coli (strain SMS-3-5 / SECEC).